We begin with the raw amino-acid sequence, 603 residues long: Cdc42-interacting protein 4 (603 aa).

Positions 1-117 are required for podosome formation and interaction with AKAP9 and microtubules; it reads MDWGTELWDQ…EMKQERKMHF (117 aa). Positions 1–117 are required for translocation to the plasma membrane in response to insulin; sequence MDWGTELWDQ…EMKQERKMHF (117 aa). The F-BAR domain occupies 1–264; that stretch reads MDWGTELWDQ…AAESVDAKND (264 aa). A coiled-coil region spans residues 67-259; sequence FSQQQSFVQL…EGMKVAAESV (193 aa). Positions 293–539 are interaction with CDC42; the sequence is RVPSDSSLGT…YTEFDEDFEE (247 aa). Positions 293–603 are interaction with PDE6G; it reads RVPSDSSLGT…PTSYLRVTLN (311 aa). Positions 295-358 are disordered; that stretch reads PSDSSLGTPD…PSSPRSGRDP (64 aa). Phosphoserine is present on residues S296, S298, and S299. A compositionally biased stretch (basic residues) spans 316–329; sequence SRAKRWPFGKKNKP. Over residues 333 to 346 the composition is skewed to low complexity; sequence SLSLLGGHLPSTLS. Residues S335 and S351 each carry the phosphoserine modification. Positions 388-481 form a coiled coil; sequence TEDFSHLPPE…ESRVLSNRGD (94 aa). The REM-1 domain occupies 393–470; that stretch reads HLPPEQQRKR…VQKYEAWLAE (78 aa). The required for interaction with FASLG and localization to lysosomes stretch occupies residues 471–603; sequence AESRVLSNRG…PTSYLRVTLN (133 aa). A disordered region spans residues 477–541; the sequence is SNRGDSLSRH…EFDEDFEEPA (65 aa). A Phosphoserine modification is found at S482. Residues 487–543 form an interaction with DNM2 and WASL region; it reads ARPPDPPTTAPPDSSSSSTNSGSQDNKESSSEEPPSEGQDTPIYTEFDEDFEEPASP. The segment covering 497–510 has biased composition (low complexity); that stretch reads PPDSSSSSTNSGSQ. The segment at 532–603 is interaction with DNM1 and WASL; sequence EFDEDFEEPA…PTSYLRVTLN (72 aa). The required for podosome formation stretch occupies residues 540–603; sequence PASPIGQCVA…PTSYLRVTLN (64 aa). Residues 542–603 form the SH3 domain; that stretch reads SPIGQCVAIY…PTSYLRVTLN (62 aa). The tract at residues 546-603 is interaction with WAS; the sequence is QCVAIYHFEGSSEGTVSMSEGEDLSLMEEDKGDGWTRVRRKQGAEGYVPTSYLRVTLN. The tract at residues 548-603 is interaction with ARHGAP17, DAAM1, DIAPH1 and DIAPH2; the sequence is VAIYHFEGSSEGTVSMSEGEDLSLMEEDKGDGWTRVRRKQGAEGYVPTSYLRVTLN.

Belongs to the FNBP1 family. As to quaternary structure, homodimerizes, the dimers can polymerize end-to-end to form filamentous structures. Interacts with AKAP9, ARHGAP17, DAAM1, DIAPH1, DIAPH2, DNM1, FASLG/FASL, GAPVD1, LYN, microtubules, PDE6G, SRC and WAS/WASP. Interacts with the ligand binding domain of the thyroid receptor (TR) in the presence of thyroid hormone. May interact with CTNNB1 and HD/HTT. Interacts specifically with GTP-bound CDC42 and RHOQ. Interacts with DNM2 and WASL. Post-translationally, tyrosine phosphorylated. Also phosphorylated by PKA.

The protein resides in the cytoplasm. The protein localises to the cytoskeleton. Its subcellular location is the cell cortex. It localises to the lysosome. It is found in the golgi apparatus. The protein resides in the cell membrane. The protein localises to the cell projection. Its subcellular location is the phagocytic cup. Required to coordinate membrane tubulation with reorganization of the actin cytoskeleton during endocytosis. Binds to lipids such as phosphatidylinositol 4,5-bisphosphate and phosphatidylserine and promotes membrane invagination and the formation of tubules. Also promotes CDC42-induced actin polymerization by recruiting WASL/N-WASP which in turn activates the Arp2/3 complex. Actin polymerization may promote the fission of membrane tubules to form endocytic vesicles. Required for the formation of podosomes, actin-rich adhesion structures specific to monocyte-derived cells. May be required for the lysosomal retention of FASLG/FASL. Required for translocation of GLUT4 to the plasma membrane in response to insulin signaling. The polypeptide is Cdc42-interacting protein 4 (Trip10) (Mus musculus (Mouse)).